Reading from the N-terminus, the 668-residue chain is SH2 domain-containing protein B (668 aa).

Residues 373–411 form a disordered region; sequence SVSGSEESYQQCNSHPQTSRQFENGNGMRLHEEDNSSID. The segment covering 374 to 396 has biased composition (polar residues); sequence VSGSEESYQQCNSHPQTSRQFEN. The SH2 domain maps to 574–642; sequence WIEGFITKEE…DNICESSERY (69 aa).

Phosphorylated on tyrosine residues. As to expression, expressed in roots, leaves, stems and flowers.

The protein is SH2 domain-containing protein B of Arabidopsis thaliana (Mouse-ear cress).